Consider the following 360-residue polypeptide: MKSSIVAKLEALQERHEEVLAYLGDASVIADQDRFRALSREYAQLTDVTRCFKEWRSAQDDIEAAEMMLDDLEMREMAQEELKIAKARSEELEQQLQVLLLPKDPDDERDCFLEIRAGTGGDEAAIFAGDMFRMYSRYAETRRWKVEIMSASEGEHGGYKEVIAKISGDGVFGQLKFESGGHRVQRVPETESQGRIHTSACTVAVMPAIPEAELPEINAGDLRIDTFRSSGAGGQHVNTTDSAIRITHIPTGIVVECQDERSQHKNKAKAMSVLGARIRAAEMQKRQLAEASERRNLLGTGDRSDRNRTYNFPQGRVTDHRINLTLYRLDEVMEGKLDMLIQPIVQEYQADQLSALSEQD.

Glutamine 235 carries the post-translational modification N5-methylglutamine. Residues alanine 291–arginine 308 are compositionally biased toward basic and acidic residues. The tract at residues alanine 291 to phenylalanine 312 is disordered.

This sequence belongs to the prokaryotic/mitochondrial release factor family. Methylated by PrmC. Methylation increases the termination efficiency of RF1.

It is found in the cytoplasm. Peptide chain release factor 1 directs the termination of translation in response to the peptide chain termination codons UAG and UAA. This is Peptide chain release factor 1 from Yersinia pseudotuberculosis serotype I (strain IP32953).